Consider the following 199-residue polypeptide: Single-stranded DNA cytosine deaminase (199 aa).

The Bipartite nuclear localization signal motif lies at 1–30; it reads MDSLLKKQRQFLYQFKNVRWAKGRHETYLC. An interaction with SUPT6H region spans residues 2-26; it reads DSLLKKQRQFLYQFKNVRWAKGRHE. The CMP/dCMP-type deaminase domain occupies 23–130; that stretch reads GRHETYLCYV…KAEPEGLRRL (108 aa). Thr27 carries the phosphothreonine; by PKA modification. The residue at position 38 (Ser38) is a Phosphoserine; by PKA. The segment at 39 to 42 is important for interaction with CTNNBL1; that stretch reads PTSF. His56 lines the Zn(2+) pocket. Glu58 (proton donor) is an active-site residue. Cys87 and Cys90 together coordinate Zn(2+). The required for interaction with RNF126 stretch occupies residues 88–116; that stretch reads YDCARHVADFLRGYPNLSLRIFTARLYFC. Residues 184–199 carry the Nuclear export signal motif; that stretch reads LYEVDDLRDAFRTLGL.

Belongs to the cytidine and deoxycytidylate deaminase family. Interacts with CTNNBL1; the interaction is important for the immunoglobulin switch activity of AICDA. Interacts (via its NLS) with KPNA1. Interacts with PKA/PRKACA and PRKAR1A/PKR1. Interacts with SUPT6H, TRIM28 and NCL. Directly interacts with MCM3AP; this interaction may favor AICDA recruitment to immunoglobulin variable region genes, hence promoting somatic hypermutations. Requires Zn(2+) as cofactor. In terms of processing, ser-38 is the major site whereas Thr-27 is the minor site of phosphorylation. Phosphorylation regulates its class-switch recombination activity. Post-translationally, probably monoubiquitinated on several residues by RNF126. As to expression, expressed in lymph nodes, spleen and thymus.

It is found in the nucleus. The protein localises to the cytoplasm. The catalysed reaction is a 2'-deoxycytidine in single-stranded DNA + H2O + H(+) = a 2'-deoxyuridine in single-stranded DNA + NH4(+). In terms of biological role, single-stranded DNA-specific cytidine deaminase. Involved in somatic hypermutation (SHM), gene conversion, and class-switch recombination (CSR) in B-lymphocytes by deaminating C to U during transcription of Ig-variable (V) and Ig-switch (S) region DNA. Required for several crucial steps of B-cell terminal differentiation necessary for efficient antibody responses. May also play a role in the epigenetic regulation of gene expression by participating in DNA demethylation. This is Single-stranded DNA cytosine deaminase (AICDA) from Bos taurus (Bovine).